Consider the following 595-residue polypeptide: Apolipoprotein N-acyltransferase 2 (595 aa).

5 helical membrane passes run 30–50 (FLAF…FGFF), 63–83 (LFFH…HWII), 95–115 (VVAI…FPIF), 167–187 (AEIT…YTLF), and 210–230 (FITL…FLFK). A CN hydrolase domain is found at 241-555 (LNVLIVQPDA…AEALSETIDV (315 aa)). Glu-293 acts as the Proton acceptor in catalysis. Lys-372 is a catalytic residue. The active-site Nucleophile is the Cys-463. The helical transmembrane segment at 569-589 (LIPWLMLFLTGIYYLNLLIGI) threads the bilayer.

It belongs to the CN hydrolase family. Apolipoprotein N-acyltransferase subfamily.

The protein localises to the cell inner membrane. The catalysed reaction is N-terminal S-1,2-diacyl-sn-glyceryl-L-cysteinyl-[lipoprotein] + a glycerophospholipid = N-acyl-S-1,2-diacyl-sn-glyceryl-L-cysteinyl-[lipoprotein] + a 2-acyl-sn-glycero-3-phospholipid + H(+). Its pathway is protein modification; lipoprotein biosynthesis (N-acyl transfer). Functionally, catalyzes the phospholipid dependent N-acylation of the N-terminal cysteine of apolipoprotein, the last step in lipoprotein maturation. The polypeptide is Apolipoprotein N-acyltransferase 2 (Leptospira interrogans serogroup Icterohaemorrhagiae serovar copenhageni (strain Fiocruz L1-130)).